The following is a 1257-amino-acid chain: Protein flightless-1 homolog (1257 aa).

16 LRR repeats span residues 6 to 31 (LQFV…VEQM), 32 to 54 (TQMT…LSRC), 56 to 77 (NLEH…LSDL), 78 to 102 (PRLR…IFRM), 103 to 126 (KDLT…EYAK), 128 to 148 (SIVL…VCAN), 149 to 172 (LIDL…IRRL), 174 to 195 (MLQS…QLPS), 197 to 221 (TSLS…LDDM), 222 to 244 (HNLR…LFKL), 246 to 267 (NLRK…EGEW), 268 to 290 (ENLE…VVKL), 292 to 315 (RLTK…IGKL), 316 to 338 (IQLT…ISRC), 339 to 361 (VKLQ…IHLL), and 363 to 384 (DLKV…PNDA). Gelsolin-like repeat units lie at residues 523-600 (MDEA…EEFL), 640-714 (AVEM…PEFW), 759-832 (ELPK…MMFR), and 1168-1243 (EKTV…CRFR).

It belongs to the villin/gelsolin family.

Its function is as follows. May play a key role in embryonic cellularization by interacting with both the cytoskeleton and other cellular components. The sequence is that of Protein flightless-1 homolog (fli-1) from Caenorhabditis elegans.